Here is a 449-residue protein sequence, read N- to C-terminus: 3-phosphoshikimate 1-carboxyvinyltransferase (449 aa).

Residues Lys28, Ser29, and Arg33 each contribute to the 3-phosphoshikimate site. Lys28 lines the phosphoenolpyruvate pocket. Residues Gly105 and Arg133 each contribute to the phosphoenolpyruvate site. Residues Ser179, Gln181, Asp332, and Lys359 each contribute to the 3-phosphoshikimate site. Residue Gln181 participates in phosphoenolpyruvate binding. Catalysis depends on Asp332, which acts as the Proton acceptor. Positions 363 and 406 each coordinate phosphoenolpyruvate.

Belongs to the EPSP synthase family. In terms of assembly, monomer.

It localises to the cytoplasm. The catalysed reaction is 3-phosphoshikimate + phosphoenolpyruvate = 5-O-(1-carboxyvinyl)-3-phosphoshikimate + phosphate. It functions in the pathway metabolic intermediate biosynthesis; chorismate biosynthesis; chorismate from D-erythrose 4-phosphate and phosphoenolpyruvate: step 6/7. In terms of biological role, catalyzes the transfer of the enolpyruvyl moiety of phosphoenolpyruvate (PEP) to the 5-hydroxyl of shikimate-3-phosphate (S3P) to produce enolpyruvyl shikimate-3-phosphate and inorganic phosphate. This is 3-phosphoshikimate 1-carboxyvinyltransferase from Nitrobacter hamburgensis (strain DSM 10229 / NCIMB 13809 / X14).